The following is a 254-amino-acid chain: MLKLRVIPCLDVKDGRVVKGVNFVSLRDAGDPVEQAVVYDRAGADELTFLDITASHENRDTIIDVVGRTAARVFLPLTVGGGIRSTDDMRRLLLAGADKCSINSAAISRPDFINEAARKFGSQCVVVAVDARRGGEGWEVFTHGGRRGTGIDAVGWCAEMAARGAGEILLTSMDRDGTGLGFDLDLLRAVTARVNIPVIASGGVGTLAHFVEGAEAGATGLLAASVFHFGQFTIAEVKAALAAAGLPVRPVASH.

Residues D11 and D130 contribute to the active site.

Belongs to the HisA/HisF family. As to quaternary structure, heterodimer of HisH and HisF.

It is found in the cytoplasm. The catalysed reaction is 5-[(5-phospho-1-deoxy-D-ribulos-1-ylimino)methylamino]-1-(5-phospho-beta-D-ribosyl)imidazole-4-carboxamide + L-glutamine = D-erythro-1-(imidazol-4-yl)glycerol 3-phosphate + 5-amino-1-(5-phospho-beta-D-ribosyl)imidazole-4-carboxamide + L-glutamate + H(+). The protein operates within amino-acid biosynthesis; L-histidine biosynthesis; L-histidine from 5-phospho-alpha-D-ribose 1-diphosphate: step 5/9. Its function is as follows. IGPS catalyzes the conversion of PRFAR and glutamine to IGP, AICAR and glutamate. The HisF subunit catalyzes the cyclization activity that produces IGP and AICAR from PRFAR using the ammonia provided by the HisH subunit. This is Imidazole glycerol phosphate synthase subunit HisF from Acidiphilium cryptum (strain JF-5).